A 443-amino-acid polypeptide reads, in one-letter code: D-serine dehydratase (443 aa).

Lys-118 carries the N6-(pyridoxal phosphate)lysine modification.

Belongs to the serine/threonine dehydratase family. DsdA subfamily. In terms of assembly, monomer. Pyridoxal 5'-phosphate is required as a cofactor.

The catalysed reaction is D-serine = pyruvate + NH4(+). In Yersinia enterocolitica serotype O:8 / biotype 1B (strain NCTC 13174 / 8081), this protein is D-serine dehydratase.